The following is an 831-amino-acid chain: Zinc phosphodiesterase ELAC protein 2 (831 aa).

Residues 1-16 (MWALRSLLRPLGLRTM) constitute a mitochondrion transit peptide. 2 disordered regions span residues 15–47 (TMSQ…PGGP) and 179–227 (SERR…ANRK). Positions 186-212 (QQPSQSPRTSPNRLSPKQSSDSGSAEN) are enriched in polar residues. 5 positions are modified to phosphoserine: Ser191, Ser195, Ser200, Ser204, and Ser732. Positions 791-831 (LTQQADSPEDREPQQKRAHTDEPHSPQSKKESVANTLGARV) are disordered. Thr792 carries the phosphothreonine modification. Ser797 and Ser815 each carry phosphoserine. The segment covering 798-822 (PEDREPQQKRAHTDEPHSPQSKKES) has biased composition (basic and acidic residues).

Belongs to the RNase Z family. Homodimer. Interacts with PTCD1. Zn(2+) is required as a cofactor.

It localises to the mitochondrion. The protein resides in the mitochondrion matrix. Its subcellular location is the mitochondrion nucleoid. The protein localises to the nucleus. It carries out the reaction Endonucleolytic cleavage of RNA, removing extra 3' nucleotides from tRNA precursor, generating 3' termini of tRNAs. A 3'-hydroxy group is left at the tRNA terminus and a 5'-phosphoryl group is left at the trailer molecule.. Functionally, zinc phosphodiesterase, which displays mitochondrial tRNA 3'-processing endonuclease activity. Involved in tRNA maturation, by removing a 3'-trailer from precursor tRNA. Associates with mitochondrial DNA complexes at the nucleoids to initiate RNA processing and ribosome assembly. In Mus musculus (Mouse), this protein is Zinc phosphodiesterase ELAC protein 2 (Elac2).